A 234-amino-acid chain; its full sequence is uncharacterized protein (234 aa).

This is an uncharacterized protein from Acheta domesticus (House cricket).